The primary structure comprises 72 residues: Translation initiation factor IF-1 (72 aa).

The region spanning 1-72 is the S1-like domain; the sequence is MAKTDLLEVQ…ERGRIVFRHK (72 aa).

The protein belongs to the IF-1 family. As to quaternary structure, component of the 30S ribosomal translation pre-initiation complex which assembles on the 30S ribosome in the order IF-2 and IF-3, IF-1 and N-formylmethionyl-tRNA(fMet); mRNA recruitment can occur at any time during PIC assembly.

It is found in the cytoplasm. Functionally, one of the essential components for the initiation of protein synthesis. Stabilizes the binding of IF-2 and IF-3 on the 30S subunit to which N-formylmethionyl-tRNA(fMet) subsequently binds. Helps modulate mRNA selection, yielding the 30S pre-initiation complex (PIC). Upon addition of the 50S ribosomal subunit IF-1, IF-2 and IF-3 are released leaving the mature 70S translation initiation complex. The sequence is that of Translation initiation factor IF-1 from Spiroplasma kunkelii.